A 216-amino-acid chain; its full sequence is Probable methylthioribulose-1-phosphate dehydratase (216 aa).

Cysteine 87 lines the substrate pocket. The Zn(2+) site is built by histidine 105 and histidine 107. Glutamate 129 (proton donor/acceptor) is an active-site residue.

This sequence belongs to the aldolase class II family. MtnB subfamily. The cofactor is Zn(2+).

Its subcellular location is the cytoplasm. It catalyses the reaction 5-(methylsulfanyl)-D-ribulose 1-phosphate = 5-methylsulfanyl-2,3-dioxopentyl phosphate + H2O. It functions in the pathway amino-acid biosynthesis; L-methionine biosynthesis via salvage pathway; L-methionine from S-methyl-5-thio-alpha-D-ribose 1-phosphate: step 2/6. Catalyzes the dehydration of methylthioribulose-1-phosphate (MTRu-1-P) into 2,3-diketo-5-methylthiopentyl-1-phosphate (DK-MTP-1-P). The polypeptide is Probable methylthioribulose-1-phosphate dehydratase (Drosophila persimilis (Fruit fly)).